The primary structure comprises 114 residues: Progonadoliberin-2 (114 aa).

Positions 1–24 (MASSRRGLLLLLMLLTAHPGPSEA) are cleaved as a signal peptide. The residue at position 34 (Gly-34) is a Glycine amide. The tract at residues 35 to 59 (GKRALSSAQDPQNALRPPAGSPAQA) is disordered.

The protein belongs to the GnRH family.

It is found in the secreted. Its function is as follows. Stimulates the secretion of gonadotropins; it stimulates the secretion of both luteinizing and follicle-stimulating hormones. The chain is Progonadoliberin-2 (GNRH2) from Macaca mulatta (Rhesus macaque).